Reading from the N-terminus, the 64-residue chain is Large ribosomal subunit protein bL35 (64 aa).

It belongs to the bacterial ribosomal protein bL35 family.

The chain is Large ribosomal subunit protein bL35 from Coxiella burnetii (strain RSA 331 / Henzerling II).